The following is a 502-amino-acid chain: Exodeoxyribonuclease 7 large subunit (502 aa).

Over residues 474–495 the composition is skewed to low complexity; that stretch reads SAPSTTKKSAPKPAAPKAPKTP. The disordered stretch occupies residues 474–502; it reads SAPSTTKKSAPKPAAPKAPKTPGEQGSLF.

The protein belongs to the XseA family. Heterooligomer composed of large and small subunits.

It localises to the cytoplasm. It carries out the reaction Exonucleolytic cleavage in either 5'- to 3'- or 3'- to 5'-direction to yield nucleoside 5'-phosphates.. Bidirectionally degrades single-stranded DNA into large acid-insoluble oligonucleotides, which are then degraded further into small acid-soluble oligonucleotides. The protein is Exodeoxyribonuclease 7 large subunit of Ruegeria sp. (strain TM1040) (Silicibacter sp.).